The primary structure comprises 264 residues: MESGKTASPKSMPKDAQMMAQILKDMGITEYEPRVINQMLEFAFRYVTTILDDAKIYSSHAKKATVDADDVRLAIQCRADQSFTSPPPRDFLLDIARQRNQTPLPLIKPYSGPRLPPDRYCLTAPNYRLKSLQKKASTSAGRITVPRLSVGSVTSRPSTPTLGTPTPQTMSVSTKVGTPMSLTGQRFTVQMPTSQSPAVKASIPATSAVQNVLINPSLIGSKNILITTNMMSSQNTANESSNALKRKREDDDDDDDDDDDYDNL.

Residue Lys-5 is modified to N6-acetyllysine. Residues Tyr-120–Ser-137 mediate DNA binding. Residues Ser-149, Ser-152, Ser-155, and Ser-158 each carry the phosphoserine modification. Positions Ser-149–Val-176 are disordered. Residues Gly-151–Val-176 are compositionally biased toward polar residues. Phosphothreonine occurs at positions 159, 161, 164, and 178. 2 positions are modified to phosphoserine: Ser-181 and Ser-196. Positions Ser-232–Ala-243 are enriched in polar residues. Positions Ser-232–Leu-264 are disordered. Over residues Asp-250–Leu-264 the composition is skewed to acidic residues.

It belongs to the TAF9 family. In terms of assembly, component of the TFIID basal transcription factor complex, composed of TATA-box-binding protein TBP, and a number of TBP-associated factors (TAFs), including TAF1, TAF2, TAF3, TAF4, TAF5, TAF6, TAF7, TAF8, TAF9, TAF10, TAF11, TAF12 and TAF13. Component of the TATA-binding protein-free TAF complex (TFTC), the PCAF histone acetylase complex and the STAGA transcription coactivator-HAT complex. The PCAF complex consists at least of TADA2L/ADA2, SUPT3H/SPT3, TADA3L/ADA3, TAF5L/PAF65-beta, TAF6L/PAF65-alpha, TAF10/TAFII30, TAF12/TAFII20, TAF9/TAFII31 and TRRAP. The STAGA transcription coactivator-HAT complex consists at least of SUPT3H, GCN5L2, SUPT7L, TAF5L, TAF6L, TADA3L, TAD1L, TAF10, TAF12, TRRAP and TAF9. Binds N-terminal domain of p53/TP53 which is essential for transcription. Component of some MLL1/MLL complex, at least composed of the core components KMT2A/MLL1, ASH2L, HCFC1/HCF1, WDR5 and RBBP5, as well as the facultative components BACC1, CHD8, E2F6, HSP70, INO80C, KANSL1, LAS1L, MAX, MCRS1, MGA, MYST1/MOF, PELP1, PHF20, PRP31, RING2, RUVB1/TIP49A, RUVB2/TIP49B, SENP3, TAF1, TAF4, TAF6, TAF7, TAF9 and TEX10. Binds TFIIB and the Herpes simplex virus activator VP16. Forms a heterodimer with TAF6 in a complex with the TAF4B-TAF12 heterodimer. Also interacts with TAF5. Binds directly DNA. Increased DNA binding when complexed with TAF6.

It localises to the nucleus. Functionally, the TFIID basal transcription factor complex plays a major role in the initiation of RNA polymerase II (Pol II)-dependent transcription. TFIID recognizes and binds promoters with or without a TATA box via its subunit TBP, a TATA-box-binding protein, and promotes assembly of the pre-initiation complex (PIC). The TFIID complex consists of TBP and TBP-associated factors (TAFs), including TAF1, TAF2, TAF3, TAF4, TAF5, TAF6, TAF7, TAF8, TAF9, TAF10, TAF11, TAF12 and TAF13. TAF9 is also a component of the TBP-free TAFII complex (TFTC), the PCAF histone acetylase complex and the STAGA transcription coactivator-HAT complex. TAF9 and its paralog TAF9B are involved in transcriptional activation as well as repression of distinct but overlapping sets of genes. Essential for cell viability. May have a role in gene regulation associated with apoptosis. This is Transcription initiation factor TFIID subunit 9 (TAF9) from Homo sapiens (Human).